A 609-amino-acid chain; its full sequence is MPEILNHILILEKIKNLGISPGCYLWKSRKGEVLYIGKAKNLDKRVRNYLKENHPDIKTRALQKEIFDLDWIATGTEKEALILEATLIKKHNPRFNVRFKDDKKYPYICVSLSESFPMVYITRKLKDNGDRYFGPYSDVKSTRETLDIILRIFPVRKTRQVLPLPKPRRPCLNFDMGRCLGPCQGNIPVEDYKIVIDQVIQFLEGKKESLVGDLSIKMSASSNRMDFEKAARYRDMLQRIQNFREKQTVVSAEGGDEDVIGFARKKDEGQVILLEVRGGRLETKKSFPIQGVLDAEDSEILGAFFRDYYLNAALVPPLIFVPADIQEETAAVMDVLQEKTGFRPKLKSPRGGDKRSLLKIAEKNAELGLTERLLATHYRDQTASLKEIQEMFSLEHPPHIIECYDISHFQGSEPVASGVMFVEGKPFKQGYRKYNIRGYKGINDPGMIHEVISRRLQRIANEESVFPDLIVIDGGPTQLAKACEAAMEAGAERIPMIGLAKKREEIYFPGDNEPFIFDMNSSGMKLLRHLRDEAHRFGVSHHRSRRNKETMRSLIQNVPDIGLKRSKLLLRHFSGEKKIEDATKEELLAVPGIGENLAEKILKRIRKKE.

The GIY-YIG domain occupies Ile-19 to Val-97. One can recognise a UVR domain in the interval Glu-208–Phe-243.

The protein belongs to the UvrC family. In terms of assembly, interacts with UvrB in an incision complex.

It localises to the cytoplasm. Its function is as follows. The UvrABC repair system catalyzes the recognition and processing of DNA lesions. UvrC both incises the 5' and 3' sides of the lesion. The N-terminal half is responsible for the 3' incision and the C-terminal half is responsible for the 5' incision. This chain is UvrABC system protein C, found in Leptospira borgpetersenii serovar Hardjo-bovis (strain JB197).